We begin with the raw amino-acid sequence, 3432 residues long: Genome polyprotein (3432 aa).

An interaction with host EXOC1 region spans residues 2–15; that stretch reads TKKPGGPGKNRAIN. The Cytoplasmic portion of the chain corresponds to 2–109; the sequence is TKKPGGPGKN…RKQNKRGGNE (108 aa). The hydrophobic; homodimerization of capsid protein C stretch occupies residues 37–72; it reads LLDGRGPVRFVLALITFFKFTALAPTKALLGRWKAV. A propeptide spans 106–127 (ER anchor for the capsid protein C, removed in mature form by serine protease NS3); sequence GGNEGSIMWLASLAVVIAYAGA. Residues 110–130 traverse the membrane as a helical segment; it reads GSIMWLASLAVVIAYAGAMKL. The Extracellular portion of the chain corresponds to 131–253; that stretch reads SNFQGKLLMT…ATRYLMKTEN (123 aa). A glycan (N-linked (GlcNAc...) asparagine; by host) is linked at Asn142. The helical transmembrane segment at 254-274 threads the bilayer; the sequence is WIIRNPGYAFLAATLGWMLGS. Residues 275 to 279 are Cytoplasmic-facing; that stretch reads NNGQR. A helical membrane pass occupies residues 280-294; the sequence is VVFTILLLLVAPAYS. Residues 295-746 are Extracellular-facing; the sequence is FNCLGMGNRD…QVFGGAFRTL (452 aa). 6 disulfides stabilise this stretch: Cys297–Cys324, Cys354–Cys410, Cys354–Cys415, Cys368–Cys399, Cys386–Cys410, and Cys386–Cys415. A fusion peptide region spans residues 392 to 405; sequence DRGWGNGCGLFGKG. Asn448 carries an N-linked (GlcNAc...) asparagine; by host glycan. Disulfide bonds link Cys484-Cys581 and Cys598-Cys629. A helical transmembrane segment spans residues 747–767; it reads FGGMSWITQGLMGALLLWMGV. At 768-773 the chain is on the cytoplasmic side; the sequence is NARDRS. A helical membrane pass occupies residues 774 to 794; sequence IALAFLATGGVLVFLATNVHA. The Extracellular segment spans residues 795–1219; that stretch reads DTGCAIDITR…AFAEANSGGD (425 aa). Cystine bridges form between Cys798/Cys809, Cys849/Cys937, Cys973/Cys1017, Cys1074/Cys1123, Cys1085/Cys1106, and Cys1107/Cys1110. Residues Asn924 and Asn1001 are each glycosylated (N-linked (GlcNAc...) asparagine; by host). Residues 1220 to 1240 form a helical membrane-spanning segment; that stretch reads VLHLALIAVFKIQPAFLVMNM. The Cytoplasmic segment spans residues 1241 to 1250; that stretch reads LSTRWTNQEN. A helical transmembrane segment spans residues 1251 to 1271; it reads VVLVLGAALFQLASVDLQIGV. Position 1272 (His1272) is a topological domain, lumenal. The chain crosses the membrane as a helical span at residues 1273-1293; it reads GILNAAAIAWMIVRAITFPTT. Residues 1294 to 1309 lie on the Cytoplasmic side of the membrane; that stretch reads SSVTMPVLALLTPGMR. A helical transmembrane segment spans residues 1310-1330; it reads ALYLDTYRIILLVIGICSLLQ. Residues 1331-1341 are Lumenal-facing; the sequence is ERKKTMAKKKG. The chain crosses the membrane as a helical span at residues 1342–1362; that stretch reads AVLLGLALTSTGWFSPTTIAA. At 1363–1374 the chain is on the cytoplasmic side; it reads GLMVCNPNKKRG. The helical transmembrane segment at 1375-1395 threads the bilayer; sequence WPATEFLSAVGLMFAIVGGLA. Residues 1396-1398 are Lumenal-facing; that stretch reads ELD. Residues 1399-1419 traverse the membrane as a helical segment; that stretch reads IESMSIPFMLAGLMAVSYVVS. The Cytoplasmic portion of the chain corresponds to 1420-1476; the sequence is GKATDMWLERAADISWEMDAAITGSSRRLDVKLDDDGDFHLIDDPGVPWKVWVLRMS. The interacts with and activates NS3 protease stretch occupies residues 1427–1466; sequence LERAADISWEMDAAITGSSRRLDVKLDDDGDFHLIDDPGV. Residues 1477-1497 constitute an intramembrane region (helical); that stretch reads CIGLAALTPWAIVPAAFGYWL. Residues 1498–2173 are Cytoplasmic-facing; sequence TLKTTKRGGV…RMALEELPDA (676 aa). Positions 1505–1682 constitute a Peptidase S7 domain; that stretch reads GGVFWDTPSP…DRQEEPVPEA (178 aa). Active-site charge relay system; for serine protease NS3 activity residues include His1555, Asp1579, and Ser1639. The Helicase ATP-binding domain maps to 1685-1841; the sequence is PNMLRKRQMT…DSNAPIHDLQ (157 aa). The interval 1689 to 1692 is important for RNA-binding; the sequence is RKRQ. 1698–1705 is a binding site for ATP; the sequence is LHPGSGKT. The short motif at 1789 to 1792 is the DEAH box element; sequence DEAH. Positions 1852 to 2017 constitute a Helicase C-terminal domain; it reads GYEWITEYAG…GLVAQLYGPE (166 aa). Lys1893 bears the N6-acetyllysine; by host mark. The disordered stretch occupies residues 1950–1971; the sequence is NPSPITSASAAQRRGRVGRNPN. Positions 2168-2172 are regulates the ATPase activity of NS3 helicase; sequence EELPD. A helical membrane pass occupies residues 2174–2194; the sequence is LETITLIVAITVMTGGFFLLM. Residues 2195-2199 lie on the Lumenal side of the membrane; sequence MQRKG. Positions 2200–2220 form an intramembrane region, helical; sequence IGKMGLGALVLTLATFFLWAA. A topological domain (lumenal) is located at residue Glu2221. A helical membrane pass occupies residues 2222 to 2242; it reads VPGTKIAGTLLIALLLMVVLI. Over 2243-2257 the chain is Cytoplasmic; it reads PEPEKQRSQTDNQLA. The chain crosses the membrane as a helical span at residues 2258 to 2278; sequence VFLICVLTVVGVVAANEYGML. Topologically, residues 2279 to 2311 are lumenal; the sequence is EKTKADLKSMFVGKTQASGLTGLPSMALDLRPA. Positions 2312–2332 form an intramembrane region, helical; it reads TAWALYGGSTVVLTPLLKHLI. Residues 2333-2368 lie on the Lumenal side of the membrane; that stretch reads TSEYVTTSLASINSQAGSLFVLPRGVPFTDLDLTVG. A helical transmembrane segment spans residues 2369–2389; sequence LVFLGCWGQITLTTFLTAMVL. Over 2390 to 2444 the chain is Cytoplasmic; that stretch reads ATLHYGYMLPGWQAEALRAAQRRTAAGIMKNAVVDGMVATDVPELERTTPLMQKK. A helical membrane pass occupies residues 2445–2465; sequence VGQVLLIGVSVAAFLVNPNVT. At 2466–2469 the chain is on the lumenal side; that stretch reads TVRE. The helical transmembrane segment at 2470-2490 threads the bilayer; sequence AGVLVTAATLTLWDNGASAVW. The Cytoplasmic portion of the chain corresponds to 2491–3432; that stretch reads NSTTATGLCH…DVLIQEDRVI (942 aa). The region spanning 2528 to 2793 is the mRNA cap 0-1 NS5-type MT domain; that stretch reads GRPGGRTLGE…DVNLGSGTRA (266 aa). Ser2583 provides a ligand contact to S-adenosyl-L-methionine. Ser2583 bears the Phosphoserine mark. The active-site For 2'-O-MTase activity is the Lys2588. The S-adenosyl-L-methionine site is built by Gly2613, Trp2614, Thr2631, Lys2632, Asp2658, and Val2659. Catalysis depends on Asp2673, which acts as the For 2'-O-MTase activity. S-adenosyl-L-methionine is bound at residue Ile2674. Residues Lys2709 and Glu2745 each act as for 2'-O-MTase activity in the active site. Tyr2747 is a binding site for S-adenosyl-L-methionine. Residues Glu2967, His2971, Cys2976, and Cys2979 each coordinate Zn(2+). Residues 3057–3209 enclose the RdRp catalytic domain; that stretch reads GKMYADDTAG…KPLDDRFATA (153 aa). 3 residues coordinate Zn(2+): His3244, Cys3260, and Cys3379.

This sequence in the N-terminal section; belongs to the class I-like SAM-binding methyltransferase superfamily. mRNA cap 0-1 NS5-type methyltransferase family. As to quaternary structure, homodimer. Interacts (via N-terminus) with host EXOC1 (via C-terminus); this interaction results in EXOC1 degradation through the proteasome degradation pathway. Forms heterodimers with envelope protein E in the endoplasmic reticulum and Golgi. In terms of assembly, homodimer; in the endoplasmic reticulum and Golgi. Interacts with protein prM. Interacts with non-structural protein 1. Interacts with host HSPA5. As to quaternary structure, homodimer; Homohexamer when secreted. Interacts with envelope protein E. NS1 interacts with NS4B. Interacts with host complement protein CFH; this interaction leads to the degradation of C3. Interacts (via N-terminus) with serine protease NS3. In terms of assembly, forms a heterodimer with serine protease NS3. May form homooligomers. As to quaternary structure, forms a heterodimer with NS2B. Interacts with non-structural protein 2A (via N-terminus). Interacts with NS4B. Interacts with unphosphorylated RNA-directed RNA polymerase NS5; this interaction stimulates RNA-directed RNA polymerase NS5 guanylyltransferase activity. Interacts with host ILF2. Interacts with serine protease NS3. In terms of assembly, homodimer. Interacts with host STAT2; this interaction inhibits the phosphorylation of the latter, and, when all viral proteins are present (polyprotein), targets STAT2 for degradation. Interacts with serine protease NS3. Requires Mn(2+) as cofactor. The cofactor is Mg(2+). Specific enzymatic cleavages in vivo yield mature proteins. Cleavages in the lumen of endoplasmic reticulum are performed by host signal peptidase, whereas cleavages in the cytoplasmic side are performed by serine protease NS3. Signal cleavage at the 2K-4B site requires a prior NS3 protease-mediated cleavage at the 4A-2K site. In terms of processing, cleaved in post-Golgi vesicles by a host furin, releasing the mature small envelope protein M, and peptide pr. This cleavage is incomplete as up to 30% of viral particles still carry uncleaved prM. Post-translationally, N-glycosylated. N-glycosylated. The excreted form is glycosylated and this is required for efficient secretion of the protein from infected cells. In terms of processing, acetylated by host KAT5. Acetylation modulates NS3 RNA-binding and unwinding activities and plays an important positive role for viral replication. Post-translationally, phosphorylated on serines residues. This phosphorylation may trigger NS5 nuclear localization.

The protein localises to the virion. It localises to the host nucleus. Its subcellular location is the host cytoplasm. The protein resides in the host perinuclear region. It is found in the secreted. The protein localises to the virion membrane. It localises to the host endoplasmic reticulum membrane. Its subcellular location is the host cell surface. It carries out the reaction Selective hydrolysis of -Xaa-Xaa-|-Yaa- bonds in which each of the Xaa can be either Arg or Lys and Yaa can be either Ser or Ala.. The enzyme catalyses RNA(n) + a ribonucleoside 5'-triphosphate = RNA(n+1) + diphosphate. The catalysed reaction is a ribonucleoside 5'-triphosphate + H2O = a ribonucleoside 5'-diphosphate + phosphate + H(+). It catalyses the reaction ATP + H2O = ADP + phosphate + H(+). It carries out the reaction a 5'-end (5'-triphosphoguanosine)-ribonucleoside in mRNA + S-adenosyl-L-methionine = a 5'-end (N(7)-methyl 5'-triphosphoguanosine)-ribonucleoside in mRNA + S-adenosyl-L-homocysteine. The enzyme catalyses a 5'-end (N(7)-methyl 5'-triphosphoguanosine)-ribonucleoside in mRNA + S-adenosyl-L-methionine = a 5'-end (N(7)-methyl 5'-triphosphoguanosine)-(2'-O-methyl-ribonucleoside) in mRNA + S-adenosyl-L-homocysteine + H(+). Its function is as follows. Plays a role in virus budding by binding to the cell membrane and gathering the viral RNA into a nucleocapsid that forms the core of a mature virus particle. During virus entry, may induce genome penetration into the host cytoplasm after hemifusion induced by the surface proteins. Can migrate to the cell nucleus where it modulates host functions. Overcomes the anti-viral effects of host EXOC1 by sequestering and degrading the latter through the proteasome degradation pathway. Functionally, inhibits RNA silencing by interfering with host Dicer. In terms of biological role, prevents premature fusion activity of envelope proteins in trans-Golgi by binding to envelope protein E at pH 6.0. After virion release in extracellular space, gets dissociated from E dimers. Acts as a chaperone for envelope protein E during intracellular virion assembly by masking and inactivating envelope protein E fusion peptide. prM is the only viral peptide matured by host furin in the trans-Golgi network probably to avoid catastrophic activation of the viral fusion activity in acidic Golgi compartment prior to virion release. prM-E cleavage is inefficient, and many virions are only partially matured. These uncleaved prM would play a role in immune evasion. Its function is as follows. May play a role in virus budding. Exerts cytotoxic effects by activating a mitochondrial apoptotic pathway through M ectodomain. May display a viroporin activity. Functionally, binds to host cell surface receptor and mediates fusion between viral and cellular membranes. Efficient virus attachment to cell is, at least in part, mediated by host HSPA5. Envelope protein is synthesized in the endoplasmic reticulum in the form of heterodimer with protein prM. They play a role in virion budding in the ER, and the newly formed immature particle is covered with 60 spikes composed of heterodimer between precursor prM and envelope protein E. The virion is transported to the Golgi apparatus where the low pH causes dissociation of PrM-E heterodimers and formation of E homodimers. prM-E cleavage is inefficient, and many virions are only partially matured. These uncleaved prM would play a role in immune evasion. In terms of biological role, involved in immune evasion, pathogenesis and viral replication. Once cleaved off the polyprotein, is targeted to three destinations: the viral replication cycle, the plasma membrane and the extracellular compartment. Essential for viral replication. Required for formation of the replication complex and recruitment of other non-structural proteins to the ER-derived membrane structures. Excreted as a hexameric lipoparticle that plays a role against host immune response. Antagonizing the complement function. Binds to the host macrophages and dendritic cells. Inhibits signal transduction originating from Toll-like receptor 3 (TLR3). Component of the viral RNA replication complex that functions in virion assembly and antagonizes the host alpha/beta interferon antiviral response. Its function is as follows. Required cofactor for the serine protease function of NS3. May have membrane-destabilizing activity and form viroporins. Functionally, displays three enzymatic activities: serine protease, NTPase and RNA helicase. NS3 serine protease, in association with NS2B, performs its autocleavage and cleaves the polyprotein at dibasic sites in the cytoplasm: C-prM, NS2A-NS2B, NS2B-NS3, NS3-NS4A, NS4A-2K and NS4B-NS5. NS3 RNA helicase binds RNA and unwinds dsRNA in the 3' to 5' direction. In terms of biological role, regulates the ATPase activity of the NS3 helicase activity. NS4A allows NS3 helicase to conserve energy during unwinding. Functions as a signal peptide for NS4B and is required for the interferon antagonism activity of the latter. Its function is as follows. Induces the formation of ER-derived membrane vesicles where the viral replication takes place. Inhibits interferon (IFN)-induced host STAT1 phosphorylation and nuclear translocation, thereby preventing the establishment of cellular antiviral state by blocking the IFN-alpha/beta pathway. Inhibits STAT2 translocation in the nucleus after IFN-alpha treatment. Functionally, replicates the viral (+) and (-) RNA genome, and performs the capping of genomes in the cytoplasm. NS5 methylates viral RNA cap at guanine N-7 and ribose 2'-O positions. Besides its role in RNA genome replication, also prevents the establishment of cellular antiviral state by blocking the interferon-alpha/beta (IFN-alpha/beta) signaling pathway. Inhibits host TYK2 and STAT2 phosphorylation, thereby preventing activation of JAK-STAT signaling pathway. In Ardeidae (herons), this protein is Genome polyprotein.